Consider the following 293-residue polypeptide: Ribosomal protein L11 methyltransferase (293 aa).

S-adenosyl-L-methionine contacts are provided by T145, G166, D188, and N230.

Belongs to the methyltransferase superfamily. PrmA family.

The protein resides in the cytoplasm. The catalysed reaction is L-lysyl-[protein] + 3 S-adenosyl-L-methionine = N(6),N(6),N(6)-trimethyl-L-lysyl-[protein] + 3 S-adenosyl-L-homocysteine + 3 H(+). Methylates ribosomal protein L11. This chain is Ribosomal protein L11 methyltransferase, found in Shewanella halifaxensis (strain HAW-EB4).